The primary structure comprises 176 residues: Sigma intracellular receptor 2 (176 aa).

The Cytoplasmic portion of the chain corresponds to 1-9 (MGTLGARRG). A helical transmembrane segment spans residues 10 to 30 (LEWFLGFYFLSHIPITLLMDL). Residues 10–158 (LEWFLGFYFL…PYFLIPLILL (149 aa)) enclose the EXPERA domain. Residues 31–68 (QGVLPRDLYPVELRNLQQWYIEEFKDPLLQTPPAWFKS) are Lumenal-facing. Residues 69-89 (FLFCELVFQLPFFPIAAYAFF) traverse the membrane as a helical segment. The cholesterol site is built by V75 and Q77. Over 90-99 (KGGCKWIRTP) the chain is Cytoplasmic. Residues 100–120 (AIIYSVHTMTTLIPILSTLLL) traverse the membrane as a helical segment. Residues 121-141 (DDFSKASHFRGQGPKTFQERL) are Lumenal-facing. Residues 142–162 (FLISVYIPYFLIPLILLLFMV) form a helical membrane-spanning segment. Residues 163–176 (RNPYYKSEEKRKKK) lie on the Cytoplasmic side of the membrane. Positions 172 to 176 (KRKKK) match the ER retention motif motif.

It belongs to the TMEM97/sigma-2 receptor family. Homodimer. Interacts with NPC1; the interaction impairs NPC1-mediated cholesterol transport. Interacts with PGRMC1 and LDLR; the interaction increases LDL internalization. Interacts with histatin 1/HTN1; the interaction induces HTN1-stimulating wound healing. Interacts with TSPO.

The protein localises to the rough endoplasmic reticulum membrane. It localises to the nucleus membrane. Functionally, sigma-2 receptor which contributes to ameliorate dysfunctional cellular processes and slow degenerative progression by regulating cell functions including cholesterol biosynthesis/trafficking, membrane trafficking, autophagy, lipid membrane-bound protein trafficking, and receptor stabilization at the cell surface. Forms a ternary complex with PGRMC1 receptor and low density lipoprotein receptor/LDLR at the plasma membrane, which increases LDLR-mediated LDL cholesterol internalization. Decreases lysosomal sterol transporter NPC1 availability to the cell, probably through NPC1-binding, hence controlling lipid transport, including cholesterol and LBPA, outside of late endosome/lysosome. Binds regio- and stereoselective ligand 20(S)-hydroxycholesterol (20(S)-OHC) which enhances TMEM97-NPC1 interaction and decreases TMEM97-PGRMC1 and TMEM97-TSPO interactions, thereby linking OHC binding to cholesterol homeostasis. Also able to bind cholesterol. Binds histatin 1 (Hst 1)/HN1 salivary peptide at the ER membrane, which is critical for increasing mitochondria-ER contacts and stimulating Hst1 wound healing properties. May alter the activity of some cytochrome P450 proteins. Although shows homologies with sterol isomerases (EXPERA domain), not able to catalyze sterol isomerization. However, may act as sensors of these molecules. Acts as a quality control factor in the ER, promoting the proteolytic degradation of nonproductive and extramitochondrial precursor proteins in the ER membrane thus removing them from the ER surface. The sequence is that of Sigma intracellular receptor 2 (TMEM97) from Bos taurus (Bovine).